Consider the following 201-residue polypeptide: Peptidyl-tRNA hydrolase (201 aa).

Residue Y14 coordinates tRNA. H19 (proton acceptor) is an active-site residue. Positions 64, 66, and 113 each coordinate tRNA. The disordered stretch occupies residues 178 to 201; sequence PGPAMNRFNRKPEPPESGGEVAAK.

This sequence belongs to the PTH family. As to quaternary structure, monomer.

It localises to the cytoplasm. It catalyses the reaction an N-acyl-L-alpha-aminoacyl-tRNA + H2O = an N-acyl-L-amino acid + a tRNA + H(+). Functionally, hydrolyzes ribosome-free peptidyl-tRNAs (with 1 or more amino acids incorporated), which drop off the ribosome during protein synthesis, or as a result of ribosome stalling. Catalyzes the release of premature peptidyl moieties from peptidyl-tRNA molecules trapped in stalled 50S ribosomal subunits, and thus maintains levels of free tRNAs and 50S ribosomes. The polypeptide is Peptidyl-tRNA hydrolase (Koribacter versatilis (strain Ellin345)).